The primary structure comprises 554 residues: Arginine--tRNA ligase (554 aa).

Positions 129–139 (ANPTGPLHIGH) match the 'HIGH' region motif.

This sequence belongs to the class-I aminoacyl-tRNA synthetase family. Monomer.

It localises to the cytoplasm. It carries out the reaction tRNA(Arg) + L-arginine + ATP = L-arginyl-tRNA(Arg) + AMP + diphosphate. This Citrifermentans bemidjiense (strain ATCC BAA-1014 / DSM 16622 / JCM 12645 / Bem) (Geobacter bemidjiensis) protein is Arginine--tRNA ligase.